The sequence spans 249 residues: MADS-box transcription factor 7 (249 aa).

The region spanning 1 to 61 (MGRGRVELKR…GKLYEFCSTQ (61 aa)) is the MADS-box domain. Residues 90 to 180 (LKASRNEYLK…RRKLEESNHV (91 aa)) enclose the K-box domain.

As to quaternary structure, may interact with the K-box of MADS6. May interact with MADS13 and MADS18. Expressed in lodicules, stamens and carpels.

It is found in the nucleus. Functionally, probable transcription factor. May be involved in the control of flowering time. The sequence is that of MADS-box transcription factor 7 (MADS7) from Oryza sativa subsp. japonica (Rice).